The sequence spans 831 residues: V-type proton ATPase subunit a (831 aa).

The Cytoplasmic portion of the chain corresponds to 1-418; that stretch reads MSPSLFRSEE…DSYGIATYRE (418 aa). Residues 419-437 form a helical membrane-spanning segment; sequence VNHGIVAIVTFPFLFAIMF. At 438 to 439 the chain is on the vacuolar side; that stretch reads GD. Residues 440 to 456 form a helical membrane-spanning segment; it reads LGHGAIMASVALMFVLY. Topologically, residues 457-471 are cytoplasmic; that stretch reads EKTLGAKKDLDEIVG. The chain crosses the membrane as a helical span at residues 472–501; that stretch reads MVFYGRYIVLLMGLFSMYVGFVYNDLFSKP. At 502 to 548 the chain is on the vacuolar side; sequence MSIFSSRWVWPVKSEEAIARAVQVGTYPIGIDPTWHSADNNLLFMNS. Residues 549–568 traverse the membrane as a helical segment; that stretch reads YKMKLSIILGVIHMTFCLFL. Residues 569–586 are Cytoplasmic-facing; it reads SLSNYRFFKRKLDIYAVF. Residues 587–607 traverse the membrane as a helical segment; it reads VPSLIFLEAIFGYLVITIVYK. The Vacuolar portion of the chain corresponds to 608–650; the sequence is WCIDWKAKDLQPPSLLNMLILMFLSPGTLEDQLYPGQKYLQVG. Residues 651–670 form a helical membrane-spanning segment; sequence LVIAALICVPWLLIVKPFVL. The Cytoplasmic segment spans residues 671–723; the sequence is WRRHSNEENKYQSLNSDLPNVDEADALMAVDSQEKQAEPFELGEVVIHQVIHT. A helical membrane pass occupies residues 724–748; the sequence is IEFCLGCVSHTASYLRLWALSLAHN. The Vacuolar portion of the chain corresponds to 749 to 769; sequence QLSSVLWNMTLANGFRMTGIV. The helical transmembrane segment at 770 to 808 threads the bilayer; it reads GSIFVVILFGFWFIATCVVLVAMEGTSAMLHSLRLHWVE. The Cytoplasmic portion of the chain corresponds to 809-831; it reads GMSKHFEGEGYAFTPFTFKVTAE.

This sequence belongs to the V-ATPase 116 kDa subunit family. As to quaternary structure, V-ATPase is a heteromultimeric enzyme composed of a peripheral catalytic V1 complex (components A to H) attached to an integral membrane V0 proton pore complex (components: a, c, c', c'', d, e, f and VOA1).

It localises to the vacuole membrane. Subunit of the V0 complex of vacuolar(H+)-ATPase (V-ATPase), a multisubunit enzyme composed of a peripheral complex (V1) that hydrolyzes ATP and a membrane integral complex (V0) that translocates protons. V-ATPase is responsible for acidifying and maintaining the pH of intracellular compartments. The polypeptide is V-type proton ATPase subunit a (vph1) (Schizosaccharomyces pombe (strain 972 / ATCC 24843) (Fission yeast)).